The following is a 299-amino-acid chain: Protein LacX, plasmid (299 aa).

In Lactococcus lactis subsp. lactis (Streptococcus lactis), this protein is Protein LacX, plasmid (lacX).